We begin with the raw amino-acid sequence, 185 residues long: Signal peptidase complex subunit 3 (185 aa).

The Cytoplasmic segment spans residues 1-12 (MIVDTFTNRGST). The chain crosses the membrane as a helical; Signal-anchor for type II membrane protein span at residues 13 to 34 (FFSKLSTVLFFLCAVITFQGVI). Residues 35–185 (QRREVELDTP…PFHKIITQPK (151 aa)) lie on the Lumenal side of the membrane. N148 is a glycosylation site (N-linked (GlcNAc...) asparagine).

The protein belongs to the SPCS3 family. As to quaternary structure, component of the signal peptidase complex (SPC) composed of a catalytic subunit sec11 and three accessory subunits spc1, spc2 and spc3. The complex induces a local thinning of the ER membrane which is used to measure the length of the signal peptide (SP) h-region of protein substrates. This ensures the selectivity of the complex towards h-regions shorter than 18-20 amino acids. SPC associates with the translocon complex.

The protein localises to the endoplasmic reticulum membrane. Functionally, essential component of the signal peptidase complex (SPC) which catalyzes the cleavage of N-terminal signal sequences from nascent proteins as they are translocated into the lumen of the endoplasmic reticulum. Essential for the SPC catalytic activity, possibly by stabilizing and positioning the active center of the complex close to the lumenal surface. Essential for viability. The protein is Signal peptidase complex subunit 3 (spc3) of Schizosaccharomyces pombe (strain 972 / ATCC 24843) (Fission yeast).